Reading from the N-terminus, the 154-residue chain is MutT-like protein (154 aa).

The region spanning 15–136 (PLHSVSVAGV…YAIRLLDALD (122 aa)) is the Nudix hydrolase domain. Positions 48, 63, 66, and 67 each coordinate Mg(2+). The short motif at 48 to 69 (GVLELDETPETGVAREVWEETG) is the Nudix box element.

This sequence belongs to the Nudix hydrolase family.

In Streptomyces ambofaciens, this protein is MutT-like protein.